A 111-amino-acid chain; its full sequence is MIGQRIKQYRKEKGYSLSELAEKAGVAKSYLSSIERNLQTNPSIQFLEKVSAVLDVSVHTLLDEKHETEYDGQLDSEWEKLVRDAMTSGVSKKQFREFLDYQKWRKSQKEE.

The HTH cro/C1-type domain maps to 6-61 (IKQYRKEKGYSLSELAEKAGVAKSYLSSIERNLQTNPSIQFLEKVSAVLDVSVHTL). The H-T-H motif DNA-binding region spans 17–36 (LSELAEKAGVAKSYLSSIER). The Sin domain occupies 65-103 (KHETEYDGQLDSEWEKLVRDAMTSGVSKKQFREFLDYQK).

As to quaternary structure, homotetramer in the absence of SinI. Heterodimer with SinI. Interaction with SinI disrupts the SinR tetramer and its repressor activity. Interacts with hpr.

Functionally, negative as well as positive regulator of alternate developmental processes that are induced at the end of vegetative growth in response to nutrient depletion. Binds to the alkaline protease (aprE) gene at two sites. Also acts as a repressor of the key sporulation gene spo0A. Negatively regulates transcription of the eps operon, which is responsible for the biosynthesis of an exopolysaccharide involved in biofilm formation; therefore it could govern the transition between a state in which bacteria swim or swarm and a state in which bacteria assemble into multicellular communities. Acts with Hpr as a corepressor of epr expression. Also negatively regulates transcription of the lutABC operon, which is required for lactate utilization. Repressor activity is regulated by SinI. The polypeptide is HTH-type transcriptional regulator SinR (sinR) (Bacillus subtilis (strain 168)).